The chain runs to 358 residues: Uroporphyrinogen decarboxylase (358 aa).

Substrate is bound by residues 27–31 (RQAGR), D77, Y154, S209, and H327.

It belongs to the uroporphyrinogen decarboxylase family. In terms of assembly, homodimer.

The protein resides in the cytoplasm. It carries out the reaction uroporphyrinogen III + 4 H(+) = coproporphyrinogen III + 4 CO2. Its pathway is porphyrin-containing compound metabolism; protoporphyrin-IX biosynthesis; coproporphyrinogen-III from 5-aminolevulinate: step 4/4. Catalyzes the decarboxylation of four acetate groups of uroporphyrinogen-III to yield coproporphyrinogen-III. This Azoarcus sp. (strain BH72) protein is Uroporphyrinogen decarboxylase.